Here is a 360-residue protein sequence, read N- to C-terminus: Mannan endo-1,4-beta-mannosidase (360 aa).

Positions 1-24 are cleaved as a signal peptide; the sequence is MLKKLAVCLSIVLLLLGAASPISA. The GH26 domain occupies 36 to 347; sequence QTTKDIMNWL…YQNSWTLNKG (312 aa). His129 serves as a coordination point for substrate. Catalysis depends on Glu191, which acts as the Proton donor. Substrate-binding residues include Trp196 and Tyr266. Catalysis depends on Glu290, which acts as the Nucleophile.

It belongs to the glycosyl hydrolase 26 family. As to quaternary structure, homodimer.

It localises to the secreted. The catalysed reaction is Random hydrolysis of (1-&gt;4)-beta-D-mannosidic linkages in mannans, galactomannans and glucomannans.. Its function is as follows. Involved in the degradation of glucomannan. Catalyzes the endo hydrolysis of beta-1,4-linked mannan, galactomannan and glucomannan. The sequence is that of Mannan endo-1,4-beta-mannosidase from Bacillus subtilis.